Reading from the N-terminus, the 457-residue chain is tRNA modification GTPase MnmE (457 aa).

(6S)-5-formyl-5,6,7,8-tetrahydrofolate is bound by residues Arg-24, Glu-81, and Lys-121. Positions 218–380 (GIKIVITGKP…LLKYLTKIIS (163 aa)) constitute a TrmE-type G domain. Position 228 (Asn-228) interacts with K(+). GTP-binding positions include 228-233 (NVGKSS), 247-253 (TNIAGTT), 272-275 (DTAG), and 338-341 (NKAD). Mg(2+) is bound at residue Ser-232. The K(+) site is built by Thr-247, Ile-249, and Thr-252. Thr-253 provides a ligand contact to Mg(2+). Lys-457 lines the (6S)-5-formyl-5,6,7,8-tetrahydrofolate pocket.

The protein belongs to the TRAFAC class TrmE-Era-EngA-EngB-Septin-like GTPase superfamily. TrmE GTPase family. As to quaternary structure, homodimer. Heterotetramer of two MnmE and two MnmG subunits. It depends on K(+) as a cofactor.

Its subcellular location is the cytoplasm. Functionally, exhibits a very high intrinsic GTPase hydrolysis rate. Involved in the addition of a carboxymethylaminomethyl (cmnm) group at the wobble position (U34) of certain tRNAs, forming tRNA-cmnm(5)s(2)U34. The chain is tRNA modification GTPase MnmE from Baumannia cicadellinicola subsp. Homalodisca coagulata.